Consider the following 337-residue polypeptide: Anthranilate phosphoribosyltransferase (337 aa).

Residues Gly-81, 84–85 (GD), Ser-89, 91–94 (NVST), 109–117 (KHGNRAATS), and Ala-121 contribute to the 5-phospho-alpha-D-ribose 1-diphosphate site. Gly-81 contacts anthranilate. Ser-93 lines the Mg(2+) pocket. Anthranilate is bound at residue Asn-112. Arg-167 provides a ligand contact to anthranilate. Positions 226 and 227 each coordinate Mg(2+).

This sequence belongs to the anthranilate phosphoribosyltransferase family. In terms of assembly, homodimer. It depends on Mg(2+) as a cofactor.

The enzyme catalyses N-(5-phospho-beta-D-ribosyl)anthranilate + diphosphate = 5-phospho-alpha-D-ribose 1-diphosphate + anthranilate. It participates in amino-acid biosynthesis; L-tryptophan biosynthesis; L-tryptophan from chorismate: step 2/5. Functionally, catalyzes the transfer of the phosphoribosyl group of 5-phosphorylribose-1-pyrophosphate (PRPP) to anthranilate to yield N-(5'-phosphoribosyl)-anthranilate (PRA). This is Anthranilate phosphoribosyltransferase from Methylorubrum extorquens (strain CM4 / NCIMB 13688) (Methylobacterium extorquens).